We begin with the raw amino-acid sequence, 459 residues long: Putrescine aminotransferase (459 aa).

Pyridoxal 5'-phosphate is bound by residues 150–151 (GT) and Q274. K300 is modified (N6-(pyridoxal phosphate)lysine). T332 contributes to the pyridoxal 5'-phosphate binding site.

It belongs to the class-III pyridoxal-phosphate-dependent aminotransferase family. Putrescine aminotransferase subfamily. It depends on pyridoxal 5'-phosphate as a cofactor.

It catalyses the reaction an alkane-alpha,omega-diamine + 2-oxoglutarate = an omega-aminoaldehyde + L-glutamate. It carries out the reaction putrescine + 2-oxoglutarate = 1-pyrroline + L-glutamate + H2O. The catalysed reaction is cadaverine + 2-oxoglutarate = 5-aminopentanal + L-glutamate. It functions in the pathway amine and polyamine degradation; putrescine degradation; 4-aminobutanal from putrescine (transaminase route): step 1/1. In terms of biological role, catalyzes the aminotransferase reaction from putrescine to 2-oxoglutarate, leading to glutamate and 4-aminobutanal, which spontaneously cyclizes to form 1-pyrroline. This is the first step in one of two pathways for putrescine degradation, where putrescine is converted into 4-aminobutanoate (gamma-aminobutyrate or GABA) via 4-aminobutanal. Also functions as a cadaverine transaminase in a a L-lysine degradation pathway to succinate that proceeds via cadaverine, glutarate and L-2-hydroxyglutarate. The protein is Putrescine aminotransferase of Escherichia coli O6:K15:H31 (strain 536 / UPEC).